A 77-amino-acid chain; its full sequence is Major outer membrane lipoprotein Lpp (77 aa).

Residues 1–19 (MNRTKLVLGAVILGSHSAG) form the signal peptide. The N-palmitoyl cysteine moiety is linked to residue cysteine 20. The S-diacylglycerol cysteine moiety is linked to residue cysteine 20. 2 repeats span residues 23–33 (NAKIDQLSSDV) and 37–47 (NAKVDQLSNDV). Residues 26–74 (IDQLSSDVQTLNAKVDQLSNDVNAMRSDVQAAKDDAARANQRLDNQAHA) adopt a coiled-coil conformation. Residues 56–77 (AAKDDAARANQRLDNQAHAYKK) are disordered. The residue at position 77 (lysine 77) is an N6-murein peptidoglycan lysine.

Belongs to the Lpp family. As to quaternary structure, homotrimer.

It is found in the cell outer membrane. It localises to the secreted. The protein localises to the cell wall. Functionally, a highly abundant outer membrane lipoprotein that controls the distance between the inner and outer membranes. The only protein known to be covalently linked to the peptidoglycan network (PGN). Also non-covalently binds the PGN. The link between the cell outer membrane and PGN contributes to maintenance of the structural and functional integrity of the cell envelope, and maintains the correct distance between the PGN and the outer membrane. This is Major outer membrane lipoprotein Lpp from Serratia marcescens.